Reading from the N-terminus, the 1350-residue chain is uncharacterized protein (1350 aa).

Disordered stretches follow at residues 348–371 (SLVG…LDDS) and 923–944 (SKME…RGTG). The span at 923–932 (SKMEGGERDA) shows a compositional bias: basic and acidic residues.

This is an uncharacterized protein from Ictalurid herpesvirus 1 (strain Auburn) (IcHV-1).